Consider the following 522-residue polypeptide: 2-isopropylmalate synthase (522 aa).

One can recognise a Pyruvate carboxyltransferase domain in the interval 5–267 (VIIFDTTLRD…DCGINAKEIH (263 aa)). Positions 14, 202, 204, and 238 each coordinate Mn(2+). The interval 392–522 (QLQHMMVHSD…IHKERELGGV (131 aa)) is regulatory domain.

It belongs to the alpha-IPM synthase/homocitrate synthase family. LeuA type 1 subfamily. As to quaternary structure, homodimer. The cofactor is Mn(2+).

The protein localises to the cytoplasm. It catalyses the reaction 3-methyl-2-oxobutanoate + acetyl-CoA + H2O = (2S)-2-isopropylmalate + CoA + H(+). Its pathway is amino-acid biosynthesis; L-leucine biosynthesis; L-leucine from 3-methyl-2-oxobutanoate: step 1/4. Catalyzes the condensation of the acetyl group of acetyl-CoA with 3-methyl-2-oxobutanoate (2-ketoisovalerate) to form 3-carboxy-3-hydroxy-4-methylpentanoate (2-isopropylmalate). This Shewanella frigidimarina (strain NCIMB 400) protein is 2-isopropylmalate synthase.